The following is a 364-amino-acid chain: D-alanine--D-alanine ligase (364 aa).

The 207-residue stretch at 140–346 (KKLALLEGIP…YSQLIDKLIS (207 aa)) folds into the ATP-grasp domain. ATP is bound at residue 173 to 228 (ESEFSYPVFVKPANSGSSVGISKAKDREDLVLAIHEAFLYDTKILIEQAINAREIE). Mg(2+) contacts are provided by aspartate 299, glutamate 313, and asparagine 315.

The protein belongs to the D-alanine--D-alanine ligase family. The cofactor is Mg(2+). It depends on Mn(2+) as a cofactor.

Its subcellular location is the cytoplasm. It carries out the reaction 2 D-alanine + ATP = D-alanyl-D-alanine + ADP + phosphate + H(+). Its pathway is cell wall biogenesis; peptidoglycan biosynthesis. In terms of biological role, cell wall formation. The protein is D-alanine--D-alanine ligase of Caldicellulosiruptor bescii (strain ATCC BAA-1888 / DSM 6725 / KCTC 15123 / Z-1320) (Anaerocellum thermophilum).